The primary structure comprises 313 residues: DNA-directed RNA polymerase subunit alpha (313 aa).

The tract at residues 1–227 is alpha N-terminal domain (alpha-NTD); it reads MMLDVAPPRF…DFFGLFAEGY (227 aa). Positions 242-313 are alpha C-terminal domain (alpha-CTD); the sequence is RPVITDERPI…YGYTLESGRE (72 aa).

It belongs to the RNA polymerase alpha chain family. In terms of assembly, homodimer. The RNAP catalytic core consists of 2 alpha, 1 beta, 1 beta' and 1 omega subunit. When a sigma factor is associated with the core the holoenzyme is formed, which can initiate transcription.

It catalyses the reaction RNA(n) + a ribonucleoside 5'-triphosphate = RNA(n+1) + diphosphate. DNA-dependent RNA polymerase catalyzes the transcription of DNA into RNA using the four ribonucleoside triphosphates as substrates. This Rubrobacter xylanophilus (strain DSM 9941 / JCM 11954 / NBRC 16129 / PRD-1) protein is DNA-directed RNA polymerase subunit alpha.